We begin with the raw amino-acid sequence, 71 residues long: Translation initiation factor IF-1 (71 aa).

The region spanning 1–71 (MSKQEMLSFS…LTKGRITFRG (71 aa)) is the S1-like domain.

The protein belongs to the IF-1 family. In terms of assembly, component of the 30S ribosomal translation pre-initiation complex which assembles on the 30S ribosome in the order IF-2 and IF-3, IF-1 and N-formylmethionyl-tRNA(fMet); mRNA recruitment can occur at any time during PIC assembly.

Its subcellular location is the cytoplasm. Functionally, one of the essential components for the initiation of protein synthesis. Stabilizes the binding of IF-2 and IF-3 on the 30S subunit to which N-formylmethionyl-tRNA(fMet) subsequently binds. Helps modulate mRNA selection, yielding the 30S pre-initiation complex (PIC). Upon addition of the 50S ribosomal subunit IF-1, IF-2 and IF-3 are released leaving the mature 70S translation initiation complex. This Pelagibacter ubique (strain HTCC1062) protein is Translation initiation factor IF-1.